Here is a 2144-residue protein sequence, read N- to C-terminus: Cadherin EGF LAG seven-pass G-type receptor 2 (2144 aa).

Cadherin domains lie at 1 to 40 (EDQV…APQF), 41 to 146 (LRDS…PPVF), 147 to 248 (EQDE…PPVL), and 253 to 371 (ILFN…SPLL). Topologically, residues 1–1605 (EDQVSYTLAI…GEILPLKTLT (1605 aa)) are extracellular. N-linked (GlcNAc...) asparagine glycans are attached at residues N261, N301, N407, and N437. One can recognise an EGF-like 1; calcium-binding domain in the interval 453–511 (DDNICLREPCENYMRCVSVLRFDSSAPFIASSSVLFRPIHPVGGLRCRCPPGFTGDYCE). Cystine bridges form between C457-C468, C462-C499, C501-C510, C517-C528, C522-C537, C539-C548, C557-C568, C562-C578, and C580-C590. The region spanning 513 to 549 (EVDLCYSRPCGPHGHCRSREGGYTCLCRDGYTGEHCE) is the EGF-like 2; calcium-binding domain. An EGF-like 3; calcium-binding domain is found at 553–591 (RSGRCTPGVCKNGGTCVNLLVGGFKCDCPSGDFEKPFCQ). Residues 592 to 796 (VTTRSFPARS…IANNGTVPGC (205 aa)) enclose the Laminin G-like 1 domain. N726 and N790 each carry an N-linked (GlcNAc...) asparagine glycan. Disulfide bonds link C770–C796, C803–C814, C808–C823, and C825–C834. One can recognise an EGF-like 4; calcium-binding domain in the interval 799-835 (KKNVCDSNTCHNGGTCVNQWDAFSCECPLGFGGKSCA). N816 carries the post-translational modification (3R)-3-hydroxyasparagine. The Laminin G-like 2 domain maps to 839–1016 (ANPQRFLGSS…GESINVEPGC (178 aa)). The N-linked (GlcNAc...) asparagine glycan is linked to N966. Intrachain disulfides connect C986–C1016, C1022–C1033, C1027–C1042, C1044–C1053, C1057–C1068, C1062–C1080, C1082–C1091, C1112–C1124, C1114–C1131, C1133–C1146, C1149–C1161, C1151–C1168, C1170–C1179, and C1182–C1194. One can recognise an EGF-like 5; calcium-binding domain in the interval 1018–1053 (WPDPCDSNPCPTNSYCSNDWDSYSCSCDPGYYGDNC). The residue at position 1035 (N1035) is a (3R)-3-hydroxyasparagine. N1052 carries N-linked (GlcNAc...) asparagine glycosylation. Positions 1054–1092 (TNVCDLNPCEHQSACTRKPSAPHGYICECLPNYLGPYCE) constitute an EGF-like 6; calcium-binding domain. An EGF-like 7; calcium-binding domain is found at 1108-1147 (TCGPCNCDVSKGFDPDCNKTSGECHCKENHYRPPSSPTCL). N-linked (GlcNAc...) asparagine glycosylation occurs at N1125. The Laminin EGF-like domain occupies 1149 to 1196 (CDCYPTGSLSRVCDPEDGQCPCKPGVIGRQCDRCDNPFAEVTTNGCEV). N-linked (GlcNAc...) asparagine glycans are attached at residues N1249, N1268, and N1286. A GAIN-B domain is found at 1424–1594 (ETTVILPESV…AVLMDVSRRE (171 aa)). The segment at 1439-1466 (PMVRSAGPGEAQETEELARRQRRHPELS) is disordered. 2 disulfide bridges follow: C1544/C1576 and C1564/C1578. The interval 1544–1594 (CVFWNHSILVSGTGGWSARGCEVVFRNESHVSCQCNHMTSFAVLMDVSRRE) is GPS. N-linked (GlcNAc...) asparagine glycosylation is found at N1548 and N1570. The chain crosses the membrane as a helical span at residues 1606-1626 (YVALGVTLAALMITFLFLTLL). Residues 1627–1641 (RALRSNQHGIRRNLT) lie on the Cytoplasmic side of the membrane. A helical membrane pass occupies residues 1642–1662 (AALGLAQLVFLLGINQADLPF). A topological domain (extracellular) is located at residue A1663. Residues 1664 to 1684 (CTVIAILLHFLYLCTFSWALL) form a helical membrane-spanning segment. Residues 1685–1705 (EALHLYRALTEVRDVNASPMR) lie on the Cytoplasmic side of the membrane. The helical transmembrane segment at 1706–1726 (FYYMLGWGVPAFITGLAVGLD) threads the bilayer. Residues 1727–1744 (PEGYGNPDFCWLSIYDTL) lie on the Extracellular side of the membrane. Residues 1745 to 1765 (IWSFAGPVAFAVSMSVFLYIL) form a helical membrane-spanning segment. The Cytoplasmic segment spans residues 1766 to 1789 (SARASCAAQRQGFEKKGPVSGLRS). Residues 1790 to 1810 (SFTVLLLLSATWLLALLSVNS) form a helical membrane-spanning segment. Residues 1811–1816 (DTLLFH) lie on the Extracellular side of the membrane. The helical transmembrane segment at 1817–1837 (YLFAACNCVQGPFIFLSYVVL) threads the bilayer. At 1838–2144 (SKEVRKALKF…SEFLFFNFLH (307 aa)) the chain is on the cytoplasmic side. The segment at 1914 to 2109 (TLNPGQVPPG…PPRPPPRQSL (196 aa)) is disordered. Residues 1943–1955 (TDSDSDLSLEDDQ) are compositionally biased toward acidic residues. The span at 2016 to 2025 (GTTTKENSGS) shows a compositional bias: polar residues. The span at 2028-2040 (LEERPRENGDALT) shows a compositional bias: basic and acidic residues. The span at 2082 to 2095 (GTGSSRGSTASEGS) shows a compositional bias: polar residues.

Belongs to the G-protein coupled receptor 2 family. LN-TM7 subfamily. Heterodimer of 2 chains generated by proteolytic processing; the large extracellular N-terminal fragment and the membrane-bound C-terminal fragment predominantly remain associated and non-covalently linked. Post-translationally, the iron and 2-oxoglutarate dependent 3-hydroxylation of aspartate and asparagine is (R) stereospecific within EGF domains. Autoproteolytically processed at the GPS region of the GAIN-B domain; this cleavage modulates receptor activity. In terms of tissue distribution, expressed in the brain. High expression in cerebellum and olfactory bulb. Weaker expression in cerebral cortex, hippocampus and brain stem.

Its subcellular location is the cell membrane. In terms of biological role, receptor that may have an important role in cell/cell signaling during nervous system formation. The chain is Cadherin EGF LAG seven-pass G-type receptor 2 from Rattus norvegicus (Rat).